Consider the following 192-residue polypeptide: MDIQQNKTNKQKKKRNRFIFRSSILLILVAAVVFAIVSNMKDDNKIYRVGDAAPDFQLKQISEEVDQSTVQLSDLEGKGVMLNFWATWCDPCKAEMPYMQDLYAEYKEKGVEIVAVSLDGTELVVDQFIDEYDLTFPVPHDKNGEVKDLYKIGPMPTTYFIKPNGEIEEIVQGALTLDRLEGYLNDIAPQQN.

The helical; Signal-anchor for type II membrane protein transmembrane segment at 22–41 threads the bilayer; the sequence is SSILLILVAAVVFAIVSNMK. A Thioredoxin domain is found at 47–189; the sequence is YRVGDAAPDF…LEGYLNDIAP (143 aa). Cys89 and Cys92 are joined by a disulfide.

It belongs to the thioredoxin family. ResA subfamily.

The protein localises to the cell membrane. It participates in protein modification; cytochrome c assembly. Thiol-disulfide oxidoreductase which is required in disulfide reduction during c-type cytochrome synthesis. May accept reducing equivalents from CcdA, leading to breakage of disulfide bonds in apocytochrome c; following this reduction heme can be covalently attached. The chain is Thiol-disulfide oxidoreductase ResA from Oceanobacillus iheyensis (strain DSM 14371 / CIP 107618 / JCM 11309 / KCTC 3954 / HTE831).